The chain runs to 860 residues: Eukaryotic translation initiation factor 3 subunit C (860 aa).

The tract at residues Met1–Thr79 is disordered. Acidic residues-rich tracts occupy residues Ser16–Ala53 and Asp67–Asp76. One can recognise a PCI domain in the interval Phe598–Glu772. The disordered stretch occupies residues Ala808–Ala860. The span at Gly814 to Thr830 shows a compositional bias: gly residues. Positions Ala831 to Gln847 are enriched in low complexity. Positions Gln848–Ala860 are enriched in gly residues.

The protein belongs to the eIF-3 subunit C family. As to quaternary structure, component of the eukaryotic translation initiation factor 3 (eIF-3) complex.

It localises to the cytoplasm. In terms of biological role, component of the eukaryotic translation initiation factor 3 (eIF-3) complex, which is involved in protein synthesis of a specialized repertoire of mRNAs and, together with other initiation factors, stimulates binding of mRNA and methionyl-tRNAi to the 40S ribosome. The eIF-3 complex specifically targets and initiates translation of a subset of mRNAs involved in cell proliferation. This is Eukaryotic translation initiation factor 3 subunit C from Coccidioides immitis (strain RS) (Valley fever fungus).